The sequence spans 469 residues: UDP-glycosyltransferase 43 (469 aa).

UDP-alpha-D-glucose is bound by residues S280, 345–346 (WV), 363–371 (HCGWNSILE), and 385–388 (YSEQ).

It belongs to the UDP-glycosyltransferase family.

Its activity is regulated as follows. Inhibited by Cu(2+) or Zn(2+). Its function is as follows. Glycosyltransferase that catalyzes the C-glucosylation of daidzein to puerarin. Shows activity with the isoflavones daidzein and genistein, but has no activity towards flavonoids such as 2-hydroxynaringenin. Can use UDP-glucose, but not UDP-galactose or UDP-glucuronic acid as sugar donor. Does not require bivalent cations for activity. The protein is UDP-glycosyltransferase 43 of Pueraria montana var. lobata (Kudzu vine).